The chain runs to 325 residues: Quinone oxidoreductase (325 aa).

This sequence belongs to the zinc-containing alcohol dehydrogenase family. Quinone oxidoreductase subfamily.

It catalyses the reaction 2 a quinone + NADPH + H(+) = 2 a 1,4-benzosemiquinone + NADP(+). In Pseudomonas aeruginosa (strain ATCC 15692 / DSM 22644 / CIP 104116 / JCM 14847 / LMG 12228 / 1C / PRS 101 / PAO1), this protein is Quinone oxidoreductase (qor).